The following is a 310-amino-acid chain: Methionyl-tRNA formyltransferase (310 aa).

A (6S)-5,6,7,8-tetrahydrofolate-binding site is contributed by 111-114 (SLLP).

It belongs to the Fmt family.

The enzyme catalyses L-methionyl-tRNA(fMet) + (6R)-10-formyltetrahydrofolate = N-formyl-L-methionyl-tRNA(fMet) + (6S)-5,6,7,8-tetrahydrofolate + H(+). Functionally, attaches a formyl group to the free amino group of methionyl-tRNA(fMet). The formyl group appears to play a dual role in the initiator identity of N-formylmethionyl-tRNA by promoting its recognition by IF2 and preventing the misappropriation of this tRNA by the elongation apparatus. In Rhodopseudomonas palustris (strain TIE-1), this protein is Methionyl-tRNA formyltransferase.